Here is a 501-residue protein sequence, read N- to C-terminus: MQPGIPKYTPSAIQLAPVVTGKFGERPQPKRLTREAMRNYLKERGDQTVLILHAKVAQKSYGNEKRFFCPPPCVYLMGSGWKKKKEQMERDGCSEQESQPCAFIGIGNSEQEMQQLNLEGKNYCTAKTLYISDSDKRKHFMLSVKMFYGNSDDIGVFLSKRIKVISKPSKKKQSLKNADLCIASGTKVALFNRLRSQTVSTRYLHVEGGNFHASSQQWGAFYIHLLDDEESEGEEFTVRDGYIHYGQTVKLVCSVTGMALPRLIIRKVDKQTALLDADDPVSQLHKCAFYLKDTERMYLCLSQERIIQFQATPCPKEPNKEMINDGASWTIISTDKAEYTFYEGMGPINAPVTPVPVVESLQLNGGGDVAMLELTGQNFTPNLRVWFGDVEAETMYRCAESMLCVVPDISAFREGWRWVRQPVQVPVTLVRNDGVIYSTSLTFTYTPEPGPRPHCSAAGAILRANSSLLASNEPNTNSEGSYTNISTNSANVTSSTAAVVS.

DNA-binding stretches follow at residues 58-68 (QKSYGNEKRFF), 166-171 (SKPSKK), and 193-198 (RLRSQT). The IPT/TIG domain maps to 356–446 (PVVESLQLNG…YSTSLTFTYT (91 aa)).

The protein belongs to the Su(H) family. In terms of assembly, interacts with activated Notch proteins. Forms a ternary complex with nrarp and the intracellular domain (NICD) of notch1. Interacts with rita1, leading to nuclear export, prevent the interaction between rbpj and NICD product and subsequent down-regulation of the Notch signaling pathway.

It localises to the nucleus. It is found in the cytoplasm. In terms of biological role, transcriptional regulator that plays a central role in Notch signaling, a signaling pathway involved in cell-cell communication that regulates a broad spectrum of cell-fate determinations. Acts as a transcriptional repressor when it is not associated with Notch proteins. When associated with some NICD product of Notch proteins (Notch intracellular domain), it acts as a transcriptional activator that activates transcription of Notch target genes. Required for the transcriptional activation of ESR1, suggesting that it is required during primary neurogenesis in embryos. Binds to the oxygen responsive element of COX4I2 and activates its transcription under hypoxia conditions (4% oxygen). In Xenopus laevis (African clawed frog), this protein is Suppressor of hairless protein homolog (rbpj).